The primary structure comprises 228 residues: Protein LIAT1 (228 aa).

Positions 1-108 (MAGRGGTGAA…RAEPRDKEEN (108 aa)) are disordered. Residues 12-24 (YGEEGEEEEEEEA) show a composition bias toward acidic residues. Positions 49 to 71 (KRKVKKKKKKKKTKGSGKGDADK) are lysine-rich domain. Positions 50-63 (RKVKKKKKKKKTKG) are enriched in basic residues. A compositionally biased stretch (basic and acidic residues) spans 90–108 (LNPHKDHGLRAEPRDKEEN). Positions 113 to 165 (PYSYSINHPCFAEIEDTLSSQINESLRWDGILTDPEAEKERIRIYKLNRRKRY) are interaction with ATE1. The stretch at 169–178 (ALKCFHSDPC) is repeat 1.

In terms of assembly, self-associates (via Lys-rich domain); targets LIAT1 to the nucleolus. Interacts with ATE1; it is not a substrate of ATE1, the interaction takes place in the cytoplasm and seems to increase ATE1 arginyltransferase activity. Interacts with JMJD6 and MRPS14. Post-translationally, post-translationally modified by JMJD6 lysyl-hydroxylase activity at its Lys-rich domain, which inhibits its self-association and nucleolar localization. In terms of tissue distribution, highly expressed in spleen, thymus, liver and brown adipose tissue. Moderately expressed in liver, testis and lung.

The protein resides in the nucleus. It localises to the nucleolus. The protein localises to the cytoplasm. Participates in nucleolar liquid-liquid phase separation (LLPS) through its N-terminal intrinsically disordered region (IDR). May be involved in ATE1-mediated N-terminal arginylation. The chain is Protein LIAT1 from Mus musculus (Mouse).